Here is a 186-residue protein sequence, read N- to C-terminus: MYKLFGKWDLTEVEVADAGIKRYVNLDPVIVPHTSGKHARQQFNKSDITIVERLVNNVMRNAQNTGKKQIALRIVDEAFDIVNSKTKKNPVQVLVEAVSNAGPREEVVRLKYGGISVPKAVDTAPQRRVDHALRNISIGSNQTAFKSKRSAAECLASELIAASNRDAKCFSINRKDGKERVAKAAR.

This sequence belongs to the universal ribosomal protein uS7 family. In terms of assembly, part of the 30S ribosomal subunit.

Its function is as follows. One of the primary rRNA binding proteins, it binds directly to 16S rRNA where it nucleates assembly of the head domain of the 30S subunit. Is located at the subunit interface close to the decoding center. The polypeptide is Small ribosomal subunit protein uS7 (Methanococcoides burtonii (strain DSM 6242 / NBRC 107633 / OCM 468 / ACE-M)).